Here is a 506-residue protein sequence, read N- to C-terminus: Maturase K (506 aa).

Belongs to the intron maturase 2 family. MatK subfamily.

It localises to the plastid. Its subcellular location is the chloroplast. In terms of biological role, usually encoded in the trnK tRNA gene intron. Probably assists in splicing its own and other chloroplast group II introns. The chain is Maturase K from Trifolium hybridum (Alsike clover).